The primary structure comprises 263 residues: Phosphatidylglycerol--prolipoprotein diacylglyceryl transferase (263 aa).

4 consecutive transmembrane segments (helical) span residues 6 to 26, 50 to 70, 85 to 105, and 112 to 132; these read VIFS…VLGI, LLTA…VLIY, TWEG…AVII, and IPIF…LLLG. Residue Arg-133 participates in a 1,2-diacyl-sn-glycero-3-phospho-(1'-sn-glycerol) binding. Helical transmembrane passes span 169–189, 197–217, and 233–253; these read LYEA…LFYL, GATT…VEFF, and MGQL…LGAL.

Belongs to the Lgt family.

It localises to the cell membrane. It catalyses the reaction L-cysteinyl-[prolipoprotein] + a 1,2-diacyl-sn-glycero-3-phospho-(1'-sn-glycerol) = an S-1,2-diacyl-sn-glyceryl-L-cysteinyl-[prolipoprotein] + sn-glycerol 1-phosphate + H(+). It participates in protein modification; lipoprotein biosynthesis (diacylglyceryl transfer). Functionally, catalyzes the transfer of the diacylglyceryl group from phosphatidylglycerol to the sulfhydryl group of the N-terminal cysteine of a prolipoprotein, the first step in the formation of mature lipoproteins. This Wolbachia pipientis subsp. Culex pipiens (strain wPip) protein is Phosphatidylglycerol--prolipoprotein diacylglyceryl transferase.